A 267-amino-acid chain; its full sequence is Oxidoreductase ordB (267 aa).

The protein belongs to the avfA family.

It functions in the pathway mycotoxin biosynthesis. In terms of biological role, oxidoreductase; part of the fragmented gene cluster that mediates the biosynthesis of dothistromin (DOTH), a polyketide toxin very similar in structure to the aflatoxin precursor, versicolorin B. The first step of the pathway is the conversion of acetate to norsolorinic acid (NOR) and requires the fatty acid synthase subunits hexA and hexB, as well as the polyketide synthase pksA. PksA combines a hexanoyl starter unit and 7 malonyl-CoA extender units to synthesize the precursor NOR. The hexanoyl starter unit is provided to the acyl-carrier protein (ACP) domain by the fungal fatty acid synthase hexA/hexB. The second step is the conversion of NOR to averantin (AVN) and requires the norsolorinic acid ketoreductase nor1, which catalyzes the dehydration of norsolorinic acid to form (1'S)-averantin. The cytochrome P450 monooxygenase avnA then catalyzes the hydroxylation of AVN to 5'hydroxyaverantin (HAVN). The next step is performed by adhA that transforms HAVN to averufin (AVF). Averufin might then be converted to hydroxyversicolorone by cypX and avfA. Hydroxyversicolorone is further converted versiconal hemiacetal acetate (VHA) by moxY. VHA is then the substrate for the versiconal hemiacetal acetate esterase est1 to yield versiconal (VAL). Versicolorin B synthase vbsA then converts VAL to versicolorin B (VERB) by closing the bisfuran ring. Then, the activity of the versicolorin B desaturase verB leads to versicolorin A (VERA). DotB, a predicted chloroperoxidase, may perform epoxidation of the A-ring of VERA. Alternatively, a cytochrome P450, such as cypX or avnA could catalyze this step. It is also possible that another, uncharacterized, cytochrome P450 enzyme is responsible for this step. Opening of the epoxide could potentially be achieved by the epoxide hydrolase epoA. However, epoA seems not to be required for DOTH biosynthesis, but other epoxide hydrolases may have the ability to complement this hydrolysis. Alternatively, opening of the epoxide ring could be achieved non-enzymatically. The next step is the deoxygenation of ring A to yield the 5,8-dihydroxyanthraquinone which is most likely catalyzed by the NADPH dehydrogenase encoded by ver1. The last stages of DOTH biosynthesis are proposed to involve hydroxylation of the bisfuran. OrdB and norB might have oxidative roles here. An alternative possibility is that cytochrome P450 monoogenases such as avnA and cypX might perform these steps in addition to previously proposed steps. The chain is Oxidoreductase ordB from Dothistroma septosporum (strain NZE10 / CBS 128990) (Red band needle blight fungus).